Consider the following 491-residue polypeptide: MKYADLREFIAQLEQKQLLKRIKTPVSPHLEMTEIGDRVLKAGGPALLFEQPVDNGRRYDFPVLANLFGTPERVAMGMGADDVMQLREIGRTLAYLKEPEPPKGLKDAWDKLPLLKQVLSMAPKEVKKAPCQDIVWEGEAVDLGKLPIQHCWPGDAAPLITWGLTVTRGPNKKRQNLGIYRQQVIGKNRVIMRWLAHRGGALDYREFRQQNPDTPYPVAVVLGCDPATILGAVTPVPDTLSEYQFAGLLRGSRTELAQCLGSDLQVPARAEIVLEGHIHPNDMALEGPYGDHTGYYNEQDSFPVLTIDRITMRENPIYHSTYTGKPPDEPAILGVALNEVFVPILQKQFPEIVDFYLPPEGCSYRMAIVSIKKQYPGHAKRVMMGCWSFLRQFMYTKFIVVVDDDVNTRDWKEVIWAITTRMDPVRDTTLIDHTPIDYLDFASPISGLGGKMGLDATNKMPGETSREWGTPIVMDDAVKARVDALWSELGL.

Asn-176 contacts Mn(2+). Prenylated FMN-binding positions include Ile-179–Arg-181, Arg-193–Leu-195, and Arg-198–Gly-199. Glu-242 contributes to the Mn(2+) binding site. The Proton donor role is filled by Asp-291.

This sequence belongs to the UbiD family. Homohexamer. It depends on prenylated FMN as a cofactor. The cofactor is Mn(2+).

It is found in the cell membrane. It catalyses the reaction a 4-hydroxy-3-(all-trans-polyprenyl)benzoate + H(+) = a 2-(all-trans-polyprenyl)phenol + CO2. Its pathway is cofactor biosynthesis; ubiquinone biosynthesis. Catalyzes the decarboxylation of 3-octaprenyl-4-hydroxy benzoate to 2-octaprenylphenol, an intermediate step in ubiquinone biosynthesis. The polypeptide is 3-octaprenyl-4-hydroxybenzoate carboxy-lyase (Chromobacterium violaceum (strain ATCC 12472 / DSM 30191 / JCM 1249 / CCUG 213 / NBRC 12614 / NCIMB 9131 / NCTC 9757 / MK)).